We begin with the raw amino-acid sequence, 593 residues long: Cell surface glycoprotein (593 aa).

The signal sequence occupies residues 1 to 22; the sequence is MRKFTLLMLLLIVISMSGIAGA. Residues Asn-29, Asn-58, Asn-66, Asn-74, Asn-114, Asn-122, Asn-145, Asn-148, Asn-158, Asn-176, Asn-208, Asn-231, Asn-326, Asn-336, Asn-340, Asn-431, Asn-471, Asn-500, and Asn-516 are each glycosylated (N-linked (GalNAc...) asparagine).

Post-translationally, N-glycosylated; contains glycans composed of methyl-Man, Man and GalNAc residues in a molar ratio of 2:3:1.

Its subcellular location is the secreted. It is found in the cell wall. The protein localises to the S-layer. Functionally, the S-layer is a paracrystalline mono-layered assembly of proteins which coat the surface of the cell. The polypeptide is Cell surface glycoprotein (slgA) (Methanothermus fervidus (strain ATCC 43054 / DSM 2088 / JCM 10308 / V24 S)).